We begin with the raw amino-acid sequence, 331 residues long: Methionyl-tRNA formyltransferase (331 aa).

Residue 111 to 114 (SLLP) coordinates (6S)-5,6,7,8-tetrahydrofolate.

This sequence belongs to the Fmt family.

The enzyme catalyses L-methionyl-tRNA(fMet) + (6R)-10-formyltetrahydrofolate = N-formyl-L-methionyl-tRNA(fMet) + (6S)-5,6,7,8-tetrahydrofolate + H(+). Attaches a formyl group to the free amino group of methionyl-tRNA(fMet). The formyl group appears to play a dual role in the initiator identity of N-formylmethionyl-tRNA by promoting its recognition by IF2 and preventing the misappropriation of this tRNA by the elongation apparatus. The sequence is that of Methionyl-tRNA formyltransferase from Thermosynechococcus vestitus (strain NIES-2133 / IAM M-273 / BP-1).